Consider the following 326-residue polypeptide: Phospho-N-acetylmuramoyl-pentapeptide-transferase (326 aa).

10 helical membrane-spanning segments follow: residues 3-23, 51-71, 77-97, 113-133, 143-163, 175-195, 199-219, 225-245, 250-270, and 306-326; these read LPTK…PYFI, TPTM…LFWV, ILLL…DDYL, ILIQ…YFTE, GIMI…VVGS, GLAA…AYMT, ISVI…LWFN, IFMG…TSVL, VLFA…VIQV, and IVIK…AFLL.

Belongs to the glycosyltransferase 4 family. MraY subfamily. Mg(2+) serves as cofactor.

It localises to the cell membrane. It catalyses the reaction UDP-N-acetyl-alpha-D-muramoyl-L-alanyl-gamma-D-glutamyl-meso-2,6-diaminopimeloyl-D-alanyl-D-alanine + di-trans,octa-cis-undecaprenyl phosphate = di-trans,octa-cis-undecaprenyl diphospho-N-acetyl-alpha-D-muramoyl-L-alanyl-D-glutamyl-meso-2,6-diaminopimeloyl-D-alanyl-D-alanine + UMP. The protein operates within cell wall biogenesis; peptidoglycan biosynthesis. Its function is as follows. Catalyzes the initial step of the lipid cycle reactions in the biosynthesis of the cell wall peptidoglycan: transfers peptidoglycan precursor phospho-MurNAc-pentapeptide from UDP-MurNAc-pentapeptide onto the lipid carrier undecaprenyl phosphate, yielding undecaprenyl-pyrophosphoryl-MurNAc-pentapeptide, known as lipid I. This Wolbachia sp. subsp. Brugia malayi (strain TRS) protein is Phospho-N-acetylmuramoyl-pentapeptide-transferase.